The chain runs to 138 residues: Large ribosomal subunit protein uL16 (138 aa).

The protein belongs to the universal ribosomal protein uL16 family. Part of the 50S ribosomal subunit.

Its function is as follows. Binds 23S rRNA and is also seen to make contacts with the A and possibly P site tRNAs. This is Large ribosomal subunit protein uL16 from Mycoplasma genitalium (strain ATCC 33530 / DSM 19775 / NCTC 10195 / G37) (Mycoplasmoides genitalium).